Here is a 188-residue protein sequence, read N- to C-terminus: CASP-like protein 4B1 (188 aa).

The interval 1–34 (MTNPDNMKPVEATDVESAAEKTSEPTPASGTSTI) is disordered. Topologically, residues 1-46 (MTNPDNMKPVEATDVESAAEKTSEPTPASGTSTITQRWKREDLIKK) are cytoplasmic. Residues 24-34 (EPTPASGTSTI) show a composition bias toward polar residues. A helical transmembrane segment spans residues 47-67 (ASPITRGICLLFSLIAFLIMV). Topologically, residues 68–84 (SNKHGYGRNFNDYEEYR) are extracellular. The helical transmembrane segment at 85–105 (YVLAISIISTLYTAWQTFAHF) threads the bilayer. At 106–124 (SKREIFDRRTSILVDFSGD) the chain is on the cytoplasmic side. Residues 125–145 (QIVAYLLISAASSAIPLTNIF) traverse the membrane as a helical segment. At 146–156 (REGQDNIFTDS) the chain is on the extracellular side. A helical membrane pass occupies residues 157 to 177 (AASAISMAIFAFIALALSALF). At 178–188 (SGYKLSTHSFI) the chain is on the cytoplasmic side.

The protein belongs to the Casparian strip membrane proteins (CASP) family. In terms of assembly, homodimer and heterodimers.

Its subcellular location is the cell membrane. This is CASP-like protein 4B1 from Arabidopsis thaliana (Mouse-ear cress).